The chain runs to 73 residues: Toxin Td9 (73 aa).

The signal sequence occupies residues 1 to 7; it reads IGMVAEC. Residues 8 to 70 form the LCN-type CS-alpha/beta domain; it reads KDGYLVGDDG…IWNSATNSCG (63 aa). 4 cysteine pairs are disulfide-bonded: cysteine 18/cysteine 69, cysteine 22/cysteine 44, cysteine 30/cysteine 50, and cysteine 34/cysteine 52. Lysine 71 bears the Lysine amide mark.

The protein belongs to the long (4 C-C) scorpion toxin superfamily. Sodium channel inhibitor family. Beta subfamily. Expressed by the venom gland.

The protein resides in the secreted. In terms of biological role, beta toxins bind voltage-independently at site-4 of sodium channels (Nav) and shift the voltage of activation toward more negative potentials thereby affecting sodium channel activation and promoting spontaneous and repetitive firing. In Tityus discrepans (Venezuelan scorpion), this protein is Toxin Td9.